A 604-amino-acid chain; its full sequence is Afamin (604 aa).

Positions 1-21 (MKQLKLTGFVIFFFFLTESLT) are cleaved as a signal peptide. 3 Albumin domains span residues 22–210 (LPTQ…EPFI), 211–403 (YYLK…RFNE), and 404–598 (TTEK…PKLA). 17 disulfides stabilise this stretch: cysteine 77/cysteine 86, cysteine 99/cysteine 114, cysteine 113/cysteine 124, cysteine 148/cysteine 193, cysteine 192/cysteine 201, cysteine 224/cysteine 270, cysteine 269/cysteine 277, cysteine 289/cysteine 303, cysteine 302/cysteine 313, cysteine 340/cysteine 385, cysteine 384/cysteine 393, cysteine 416/cysteine 462, cysteine 461/cysteine 470, cysteine 483/cysteine 499, cysteine 498/cysteine 509, cysteine 536/cysteine 581, and cysteine 580/cysteine 589. Asparagine 109 is a glycosylation site (N-linked (GlcNAc...) asparagine). Residues 215–319 (ALSSYQKNAC…RGECIIYSNK (105 aa)) form a binding pocket for hydrophobic ligands region. Asparagine 434 is a glycosylation site (N-linked (GlcNAc...) asparagine).

Belongs to the ALB/AFP/VDB family. Forms a 1:1 complex with Wnt family members; interacts with WNT3A and WNT5A. Interacts with WNT1, WNT2B, WNT3, WNT7A, WNT7B, WNT8, WNT9A, WNT9B, WNT10A and WNT10B. N-glycosylated; more than 90% of the glycans are sialylated.

It localises to the secreted. In terms of biological role, functions as a carrier for hydrophobic molecules in body fluids. Essential for the solubility and activity of lipidated Wnt family members, including WNT1, WNT2B, WNT3, WNT3A, WNT5A, WNT7A, WNT7B, WNT8, WNT9A, WNT9B, WNT10A and WNT10B. Binds vitamin E. May transport vitamin E in body fluids under conditions where the lipoprotein system is not sufficient. May be involved in the transport of vitamin E across the blood-brain barrier. In Bos taurus (Bovine), this protein is Afamin (AFM).